The following is a 301-amino-acid chain: Glycine cleavage system transcriptional activator homolog (301 aa).

The HTH lysR-type domain maps to proline 10–threonine 67. A DNA-binding region (H-T-H motif) is located at residues phenylalanine 27 to lysine 46.

This sequence belongs to the LysR transcriptional regulatory family.

Its subcellular location is the cytoplasm. Functionally, not known, the gcv operon regulated by the E.coli homolog does not exist in H.influenzae, so it probably acts as a transcriptional regulator on some other operon. This chain is Glycine cleavage system transcriptional activator homolog (gcvA), found in Haemophilus influenzae (strain ATCC 51907 / DSM 11121 / KW20 / Rd).